Consider the following 874-residue polypeptide: Cyanophycin synthetase (874 aa).

The region spanning 224–480 (KTTLAEAGIP…VAAPVIDMLF (257 aa)) is the ATP-grasp domain. An ATP-binding site is contributed by 495 to 501 (GTNGKTT).

It in the C-terminal section; belongs to the MurCDEF family. In terms of assembly, homodimer.

The enzyme catalyses [L-4-(L-arginin-2-N-yl)aspartate](n) + L-aspartate + ATP = [L-4-(L-arginin-2-N-yl)aspartate](n)-L-aspartate + ADP + phosphate + H(+). It catalyses the reaction [L-4-(L-arginin-2-N-yl)aspartate](n)-L-aspartate + L-arginine + ATP = [L-4-(L-arginin-2-N-yl)aspartate](n+1) + ADP + phosphate + H(+). Catalyzes the ATP-dependent polymerization of arginine and aspartate to multi-L-arginyl-poly-L-aspartic acid (cyanophycin; a water-insoluble reserve polymer). The polypeptide is Cyanophycin synthetase (cphA) (Geminocystis herdmanii (strain PCC 6308) (Synechocystis sp. (strain PCC 6308))).